We begin with the raw amino-acid sequence, 401 residues long: Argininosuccinate synthase (401 aa).

An ATP-binding site is contributed by 8–16; the sequence is AYSGGLDTS. Tyrosine 85 contributes to the L-citrulline binding site. An ATP-binding site is contributed by glycine 115. The L-aspartate site is built by threonine 117, asparagine 121, and aspartate 122. Asparagine 121 serves as a coordination point for L-citrulline. 4 residues coordinate L-citrulline: arginine 125, serine 173, glutamate 258, and tyrosine 270.

It belongs to the argininosuccinate synthase family. Type 1 subfamily. In terms of assembly, homotetramer.

The protein localises to the cytoplasm. The catalysed reaction is L-citrulline + L-aspartate + ATP = 2-(N(omega)-L-arginino)succinate + AMP + diphosphate + H(+). Its pathway is amino-acid biosynthesis; L-arginine biosynthesis; L-arginine from L-ornithine and carbamoyl phosphate: step 2/3. The sequence is that of Argininosuccinate synthase from Staphylococcus aureus (strain Mu3 / ATCC 700698).